A 75-amino-acid polypeptide reads, in one-letter code: UPF0270 protein PFL_4336 (75 aa).

This sequence belongs to the UPF0270 family.

This Pseudomonas fluorescens (strain ATCC BAA-477 / NRRL B-23932 / Pf-5) protein is UPF0270 protein PFL_4336.